The following is a 90-amino-acid chain: Acylphosphatase (90 aa).

The 87-residue stretch at 4–90 (TVHLRITGHV…KGQYKDFRIY (87 aa)) folds into the Acylphosphatase-like domain. Catalysis depends on residues arginine 19 and asparagine 37.

This sequence belongs to the acylphosphatase family.

The catalysed reaction is an acyl phosphate + H2O = a carboxylate + phosphate + H(+). The polypeptide is Acylphosphatase (acyP) (Caldanaerobacter subterraneus subsp. tengcongensis (strain DSM 15242 / JCM 11007 / NBRC 100824 / MB4) (Thermoanaerobacter tengcongensis)).